Reading from the N-terminus, the 198-residue chain is Angiopoietin-like protein 8 (198 aa).

The signal sequence occupies residues 1–21 (MPVPALCLLWALAMVTRPASA).

It belongs to the ANGPTL8 family. Interacts with ANGPTL3. In terms of processing, proteolytically cleaved at the N-terminus. As to expression, predominantly expressed in liver. Also expressed in adipose tissues.

The protein localises to the secreted. In terms of biological role, hormone that acts as a blood lipid regulator by regulating serum triglyceride levels. May be involved in the metabolic transition between fasting and refeeding: required to direct fatty acids to adipose tissue for storage in the fed state. This Homo sapiens (Human) protein is Angiopoietin-like protein 8.